We begin with the raw amino-acid sequence, 121 residues long: Non-specific lipid-transfer protein 9 (121 aa).

Positions 1–27 (MRKSISIAFVIAITIFMSHLNVFTVYS) are cleaved as a signal peptide. Intrachain disulfides connect C31/C80, C41/C57, C58/C102, and C78/C116.

The protein belongs to the plant LTP family.

Plant non-specific lipid-transfer proteins transfer phospholipids as well as galactolipids across membranes. May play a role in wax or cutin deposition in the cell walls of expanding epidermal cells and certain secretory tissues. The polypeptide is Non-specific lipid-transfer protein 9 (LTP9) (Arabidopsis thaliana (Mouse-ear cress)).